The chain runs to 296 residues: 4-hydroxy-tetrahydrodipicolinate synthase (296 aa).

Thr46 is a binding site for pyruvate. The active-site Proton donor/acceptor is the Tyr134. The Schiff-base intermediate with substrate role is filled by Lys162. Ile204 contributes to the pyruvate binding site.

Belongs to the DapA family. Homotetramer; dimer of dimers.

The protein resides in the cytoplasm. It carries out the reaction L-aspartate 4-semialdehyde + pyruvate = (2S,4S)-4-hydroxy-2,3,4,5-tetrahydrodipicolinate + H2O + H(+). It functions in the pathway amino-acid biosynthesis; L-lysine biosynthesis via DAP pathway; (S)-tetrahydrodipicolinate from L-aspartate: step 3/4. Its function is as follows. Catalyzes the condensation of (S)-aspartate-beta-semialdehyde [(S)-ASA] and pyruvate to 4-hydroxy-tetrahydrodipicolinate (HTPA). The polypeptide is 4-hydroxy-tetrahydrodipicolinate synthase (Clostridium novyi (strain NT)).